Here is a 310-residue protein sequence, read N- to C-terminus: Oxygen-dependent coproporphyrinogen-III oxidase (310 aa).

Position 93 (Ser93) interacts with substrate. Residues His97 and His107 each contribute to the a divalent metal cation site. Residue His107 is the Proton donor of the active site. 109–111 is a substrate binding site; the sequence is NVR. Positions 146 and 176 each coordinate a divalent metal cation. The segment at 241–276 is important for dimerization; sequence YVEFNLVYDRGTLFGLQSGGRTESILMSLPPQVRWS. 259–261 is a binding site for substrate; it reads GGR.

This sequence belongs to the aerobic coproporphyrinogen-III oxidase family. Homodimer. A divalent metal cation is required as a cofactor.

The protein resides in the cytoplasm. It carries out the reaction coproporphyrinogen III + O2 + 2 H(+) = protoporphyrinogen IX + 2 CO2 + 2 H2O. The protein operates within porphyrin-containing compound metabolism; protoporphyrin-IX biosynthesis; protoporphyrinogen-IX from coproporphyrinogen-III (O2 route): step 1/1. In terms of biological role, involved in the heme biosynthesis. Catalyzes the aerobic oxidative decarboxylation of propionate groups of rings A and B of coproporphyrinogen-III to yield the vinyl groups in protoporphyrinogen-IX. In Pseudomonas fluorescens (strain SBW25), this protein is Oxygen-dependent coproporphyrinogen-III oxidase.